A 220-amino-acid chain; its full sequence is MVALHTLLLTAFAAVSLANPIPAPELEARQIINANDLENGVCKPVVLIFARGSTELGNMGAIAGMPTCNALKLALGSQNVACQGVGGAYTASLIPNFLPANTNQASIREATGVFEMAHTRCPNSQIVAGGYSQGSAVMDNTIQDLPDVIKNKVKGVVLFGFTRNLQDLGRIPNYPKEQTKVICAVGDLVCVGTLIITPAHLTYTLNAPEAAQFLASMVSV.

A signal peptide spans 1–18 (MVALHTLLLTAFAAVSLA). 2 cysteine pairs are disulfide-bonded: cysteine 42-cysteine 121 and cysteine 68-cysteine 82. The active-site Nucleophile is serine 132. A disulfide bond links cysteine 183 and cysteine 190. Aspartate 187 is a catalytic residue. The Proton donor/acceptor role is filled by histidine 200.

The protein belongs to the cutinase family.

The protein resides in the secreted. The enzyme catalyses cutin + H2O = cutin monomers.. In terms of biological role, catalyzes the hydrolysis of complex carboxylic polyesters found in the cell wall of plants. Degrades cutin, a macromolecule that forms the structure of the plant cuticle. The protein is Probable cutinase 5 of Aspergillus terreus (strain NIH 2624 / FGSC A1156).